Here is a 548-residue protein sequence, read N- to C-terminus: Copine-2 (548 aa).

C2 domains follow at residues 6–131 (DGGA…TRPL) and 138–263 (PAGK…PLEI). Positions 39, 45, 97, 99, 102, 109, 170, 176, 232, 234, and 240 each coordinate Ca(2+). Positions 247–304 (TSVLQMSEARDGVPLEIECINPKKQRKKKSYKNSGIIILRSCKIHRNYSFLDYILGGC) are linker region. One can recognise a VWFA domain in the interval 305 to 507 (QLMFTVGIDF…AARDIVQFVP (203 aa)).

The protein belongs to the copine family. Ca(2+) serves as cofactor.

It localises to the cytoplasm. The protein localises to the nucleus. Its subcellular location is the cell membrane. Functionally, calcium-dependent phospholipid-binding protein that plays a role in calcium-mediated intracellular processes. Exhibits calcium-dependent cell membrane binding properties. The protein is Copine-2 of Mus musculus (Mouse).